The chain runs to 240 residues: UDP-2,3-diacylglucosamine hydrolase (240 aa).

5 residues coordinate Mn(2+): D8, H10, D41, N79, and H114. Position 79–80 (79–80) interacts with substrate; that stretch reads NR. The substrate site is built by D122, S160, N164, K167, and H195. Residues H195 and H197 each contribute to the Mn(2+) site.

Belongs to the LpxH family. Mn(2+) serves as cofactor.

The protein localises to the cell inner membrane. The enzyme catalyses UDP-2-N,3-O-bis[(3R)-3-hydroxytetradecanoyl]-alpha-D-glucosamine + H2O = 2-N,3-O-bis[(3R)-3-hydroxytetradecanoyl]-alpha-D-glucosaminyl 1-phosphate + UMP + 2 H(+). The protein operates within glycolipid biosynthesis; lipid IV(A) biosynthesis; lipid IV(A) from (3R)-3-hydroxytetradecanoyl-[acyl-carrier-protein] and UDP-N-acetyl-alpha-D-glucosamine: step 4/6. Its function is as follows. Hydrolyzes the pyrophosphate bond of UDP-2,3-diacylglucosamine to yield 2,3-diacylglucosamine 1-phosphate (lipid X) and UMP by catalyzing the attack of water at the alpha-P atom. Involved in the biosynthesis of lipid A, a phosphorylated glycolipid that anchors the lipopolysaccharide to the outer membrane of the cell. The sequence is that of UDP-2,3-diacylglucosamine hydrolase from Salmonella schwarzengrund (strain CVM19633).